A 623-amino-acid polypeptide reads, in one-letter code: Glutathione import ATP-binding protein GsiA (623 aa).

ABC transporter domains lie at V15–L269 and L314–L564. ATP-binding positions include G49–S56 and G357–S364.

It belongs to the ABC transporter superfamily. Glutathione importer (TC 3.A.1.5.11) family. The complex is composed of two ATP-binding proteins (GsiA), two transmembrane proteins (GsiC and GsiD) and a solute-binding protein (GsiB).

The protein resides in the cell inner membrane. The enzyme catalyses glutathione(out) + ATP + H2O = glutathione(in) + ADP + phosphate + H(+). In terms of biological role, part of the ABC transporter complex GsiABCD involved in glutathione import. Responsible for energy coupling to the transport system. The sequence is that of Glutathione import ATP-binding protein GsiA from Shigella dysenteriae serotype 1 (strain Sd197).